Reading from the N-terminus, the 214-residue chain is uncharacterized protein (214 aa).

This is an uncharacterized protein from Sinorhizobium fredii (strain NBRC 101917 / NGR234).